Reading from the N-terminus, the 583-residue chain is Extracellular serine/threonine protein kinase four-jointed (583 aa).

Residues 1–78 lie on the Cytoplasmic side of the membrane; the sequence is MYDIKRLEAG…RRRSLQRRAC (78 aa). Residues 79-99 form a helical; Signal-anchor for type II membrane protein membrane-spanning segment; that stretch reads LLSILAAFVFGMALGVVVPMF. Residues 100-583 lie on the Extracellular side of the membrane; it reads GLPRHQDSPP…LGQVQKCQGS (484 aa). The disordered stretch occupies residues 179–222; it reads RTASGRYRKGPERRLSKKMPERVQPQETSRSPTTSPTNPTSEHQ. A compositionally biased stretch (basic and acidic residues) spans 187-199; the sequence is KGPERRLSKKMPE. Positions 206-219 are enriched in low complexity; that stretch reads TSRSPTTSPTNPTS. N310 and N379 each carry an N-linked (GlcNAc...) asparagine glycan. The segment at 384-421 is disordered; that stretch reads MQSERQAQSQPHGLLKRLGAASSPGSAHQSNAIEETGT. N491 carries an N-linked (GlcNAc...) asparagine glycan.

Belongs to the FJX1/FJ family. Proteolytically cleaved to yield a secreted protein. In terms of tissue distribution, in the eye disk, expressed in a gradient ahead of the morphogenetic furrow, high at the equator and low at the poles of the eye. In the leg disk, expressed in concentric rings, possibly corresponding to segmental boundaries. In the wing disk, expression is localized in the wing pouch; low in peripheral regions and high towards the center.

The protein resides in the golgi apparatus membrane. It is found in the secreted. It carries out the reaction L-seryl-[protein] + ATP = O-phospho-L-seryl-[protein] + ADP + H(+). The enzyme catalyses L-threonyl-[protein] + ATP = O-phospho-L-threonyl-[protein] + ADP + H(+). Functionally, golgi serine/threonine protein kinase required for intermediate growth in the proximal-distal axis. Phosphorylates specific residues within extracellular cadherin domains of Fat (ft) and Dachsous (ds) as they transit through the Golgi. Acts in ommatidial polarity determination as a secondary signal downstream of Notch, JAK/STAT and wingless. Also necessary for the initiation, up-regulation or maintenance of Notch ligand, Serrate (Ser) expression in legs, thereby participating in a feedback loop with N signaling. Sufficient for joint formation and growth in the leg. The sequence is that of Extracellular serine/threonine protein kinase four-jointed from Drosophila melanogaster (Fruit fly).